Consider the following 592-residue polypeptide: Aspartate--tRNA ligase (592 aa).

Glu171 contacts L-aspartate. Positions 195-198 are aspartate; the sequence is QLFK. Arg217 lines the L-aspartate pocket. ATP is bound by residues 217–219 and Gln226; that span reads RDE. His448 provides a ligand contact to L-aspartate. Glu482 lines the ATP pocket. Arg489 contacts L-aspartate. Position 534-537 (534-537) interacts with ATP; sequence GLDR.

Belongs to the class-II aminoacyl-tRNA synthetase family. Type 1 subfamily. Homodimer.

It localises to the cytoplasm. It carries out the reaction tRNA(Asp) + L-aspartate + ATP = L-aspartyl-tRNA(Asp) + AMP + diphosphate. Its function is as follows. Catalyzes the attachment of L-aspartate to tRNA(Asp) in a two-step reaction: L-aspartate is first activated by ATP to form Asp-AMP and then transferred to the acceptor end of tRNA(Asp). In Vibrio campbellii (strain ATCC BAA-1116), this protein is Aspartate--tRNA ligase.